Reading from the N-terminus, the 541-residue chain is Membrane protein insertase YidC (541 aa).

A helical membrane pass occupies residues 7–27; it reads ILLLALALVSFLLFQQWQVET. Residues 34–55 show a composition bias toward polar residues; it reads TVSTVQQTHKNGDVPTSSTANS. A disordered region spans residues 34–59; it reads TVSTVQQTHKNGDVPTSSTANSDAPV. 4 helical membrane-spanning segments follow: residues 343–363, 418–438, 456–476, and 495–515; these read SFIQ…TFIV, LGGC…YWAL, LSAQ…MFLI, and FIPV…VLYW.

This sequence belongs to the OXA1/ALB3/YidC family. Type 1 subfamily. Interacts with the Sec translocase complex via SecD. Specifically interacts with transmembrane segments of nascent integral membrane proteins during membrane integration.

Its subcellular location is the cell inner membrane. Its function is as follows. Required for the insertion and/or proper folding and/or complex formation of integral membrane proteins into the membrane. Involved in integration of membrane proteins that insert both dependently and independently of the Sec translocase complex, as well as at least some lipoproteins. Aids folding of multispanning membrane proteins. The protein is Membrane protein insertase YidC of Aliivibrio salmonicida (strain LFI1238) (Vibrio salmonicida (strain LFI1238)).